The following is a 478-amino-acid chain: 5-hydroxytryptamine receptor 3A (478 aa).

The first 23 residues, 1 to 23, serve as a signal peptide directing secretion; it reads MLLWVQQALLALLLPTLLAQGEA. At 24–241 the chain is on the extracellular side; that stretch reads RRSRNTTRPA…MKFYVVIRRR (218 aa). N-linked (GlcNAc...) asparagine glycans are attached at residues asparagine 28, asparagine 104, asparagine 170, and asparagine 186. Cysteine 157 and cysteine 171 are oxidised to a cystine. The helical transmembrane segment at 242–268 threads the bilayer; sequence PLFYVVSLLLPSIFLMVMDIVGFYLPP. The Cytoplasmic portion of the chain corresponds to 269–273; it reads NSGER. Residues 274 to 292 traverse the membrane as a helical segment; that stretch reads VSFKITLLLGYSVFLIIVS. Residues 293–302 lie on the Extracellular side of the membrane; that stretch reads DTLPATAIGT. A helical transmembrane segment spans residues 303–321; sequence PLIGVYFVVCMALLVISLA. At 322 to 455 the chain is on the cytoplasmic side; it reads ETIFIVRLVH…GSVLDKLLFH (134 aa). Residues 389–408 form a disordered region; sequence GGPQDFEKSPRDRCSPPPPP. Over residues 393–402 the composition is skewed to basic and acidic residues; that stretch reads DFEKSPRDRC. Residues 414 to 450 are HA-stretch; determines single-channel conductance in 5-HT3 receptors; the sequence is AVCGLLQELSSIRQFLEKRDEIREVARDWLRVGSVLD. Residues 456-475 traverse the membrane as a helical segment; sequence IYLLAVLAYSITLVMLWSIW. Residues 476–478 are Extracellular-facing; sequence QYA.

It belongs to the ligand-gated ion channel (TC 1.A.9) family. 5-hydroxytryptamine receptor (TC 1.A.9.2) subfamily. HTR3A sub-subfamily. In terms of assembly, forms homopentameric as well as heteropentameric serotonin-activated cation-selective channel complexes with HTR3B or HTR3C or HTR3D or HTR3E. The homomeric complex is functional but exhibits low conductance with modified voltage dependence, and decreased agonist and antagonist affinity. Heteropentameric complexes display properties which resemble that of neuronal serotonin-activated channels in vivo. Interacts with RIC3. As to expression, expressed in cerebral cortex, amygdala, hippocampus, and testis. Detected in monocytes of the spleen and tonsil, in small and large intestine, uterus, prostate, ovary and placenta.

The protein localises to the postsynaptic cell membrane. Its subcellular location is the cell membrane. It catalyses the reaction Na(+)(in) = Na(+)(out). The enzyme catalyses K(+)(in) = K(+)(out). The catalysed reaction is Ca(2+)(in) = Ca(2+)(out). It carries out the reaction Mg(2+)(in) = Mg(2+)(out). In terms of biological role, forms serotonin (5-hydroxytryptamine/5-HT3)-activated cation-selective channel complexes, which when activated cause fast, depolarizing responses in neurons. The protein is 5-hydroxytryptamine receptor 3A of Homo sapiens (Human).